The sequence spans 129 residues: Cytochrome c oxidase subunit 13, mitochondrial (129 aa).

A mitochondrion-targeting transit peptide spans 1–9 (MFRQCAKRY). Over 10–43 (ASSLPPNALKPAFGPPDKVAAQKFKESLMATEKH) the chain is Mitochondrial matrix. A helical membrane pass occupies residues 44–71 (AKDTSNMWVKISVWVALPAIALTAVNTY). Topologically, residues 72–129 (FVEKEHAEHREHLKHVPDSEWPRDYEFMNIRSKPFFWGDGDKTLFWNPVVNRHIEHDD) are mitochondrial intermembrane.

The protein belongs to the cytochrome c oxidase subunit 6A family. As to quaternary structure, component of the cytochrome c oxidase (complex IV, CIV), a multisubunit enzyme composed of 12 subunits. The complex is composed of a catalytic core of 3 subunits COX1, COX2 and COX3, encoded in the mitochondrial DNA, and 9 supernumerary subunits COX4, COX5A (or COX5B), COX6, COX7, COX8, COX9, COX12, COX13 and COX26, which are encoded in the nuclear genome. The complex exists as a monomer or a dimer and forms supercomplexes (SCs) in the inner mitochondrial membrane with a dimer of ubiquinol-cytochrome c oxidoreductase (cytochrome b-c1 complex, complex III, CIII), resulting in 2 different assemblies (supercomplexes III(2)IV and III(2)IV(2)). COX13 interacts with COX1 and COX3 on the intermembrane space (IMS) and COX4 on the matrix side.

It is found in the mitochondrion inner membrane. Its pathway is energy metabolism; oxidative phosphorylation. Functionally, component of the cytochrome c oxidase, the last enzyme in the mitochondrial electron transport chain which drives oxidative phosphorylation. The respiratory chain contains 3 multisubunit complexes succinate dehydrogenase (complex II, CII), ubiquinol-cytochrome c oxidoreductase (cytochrome b-c1 complex, complex III, CIII) and cytochrome c oxidase (complex IV, CIV), that cooperate to transfer electrons derived from NADH and succinate to molecular oxygen, creating an electrochemical gradient over the inner membrane that drives transmembrane transport and the ATP synthase. Cytochrome c oxidase is the component of the respiratory chain that catalyzes the reduction of oxygen to water. Electrons originating from reduced cytochrome c in the intermembrane space (IMS) are transferred via the dinuclear copper A center (CU(A)) of COX2 and heme A of COX1 to the active site in COX1, a binuclear center (BNC) formed by heme A3 and copper B (CU(B)). The BNC reduces molecular oxygen to 2 water molecules using 4 electrons from cytochrome c in the IMS and 4 protons from the mitochondrial matrix. This chain is Cytochrome c oxidase subunit 13, mitochondrial (COX13), found in Saccharomyces cerevisiae (strain ATCC 204508 / S288c) (Baker's yeast).